The sequence spans 148 residues: Deoxyuridine 5'-triphosphate nucleotidohydrolase (148 aa).

Residues 67–69 (RSG), asparagine 80, 84–86 (LID), and methionine 94 contribute to the substrate site.

This sequence belongs to the dUTPase family. Mg(2+) is required as a cofactor.

It carries out the reaction dUTP + H2O = dUMP + diphosphate + H(+). The protein operates within pyrimidine metabolism; dUMP biosynthesis; dUMP from dCTP (dUTP route): step 2/2. This enzyme is involved in nucleotide metabolism: it produces dUMP, the immediate precursor of thymidine nucleotides and it decreases the intracellular concentration of dUTP so that uracil cannot be incorporated into DNA. This Burkholderia thailandensis (strain ATCC 700388 / DSM 13276 / CCUG 48851 / CIP 106301 / E264) protein is Deoxyuridine 5'-triphosphate nucleotidohydrolase.